Consider the following 182-residue polypeptide: Peptidyl-tRNA hydrolase (182 aa).

Tyrosine 14 is a tRNA binding site. The active-site Proton acceptor is the histidine 19. Residues phenylalanine 64, asparagine 66, and asparagine 112 each coordinate tRNA.

It belongs to the PTH family. Monomer.

It localises to the cytoplasm. The enzyme catalyses an N-acyl-L-alpha-aminoacyl-tRNA + H2O = an N-acyl-L-amino acid + a tRNA + H(+). Functionally, hydrolyzes ribosome-free peptidyl-tRNAs (with 1 or more amino acids incorporated), which drop off the ribosome during protein synthesis, or as a result of ribosome stalling. In terms of biological role, catalyzes the release of premature peptidyl moieties from peptidyl-tRNA molecules trapped in stalled 50S ribosomal subunits, and thus maintains levels of free tRNAs and 50S ribosomes. In Wolbachia pipientis wMel, this protein is Peptidyl-tRNA hydrolase.